The following is a 341-amino-acid chain: Methionine import ATP-binding protein MetN 1 (341 aa).

The region spanning 2–241 is the ABC transporter domain; sequence IEFRQVSKSF…PKTTIAQNFV (240 aa). ATP is bound at residue 38 to 45; the sequence is GYSGAGKS.

It belongs to the ABC transporter superfamily. Methionine importer (TC 3.A.1.24) family. In terms of assembly, the complex is composed of two ATP-binding proteins (MetN), two transmembrane proteins (MetI) and a solute-binding protein (MetQ).

The protein localises to the cell membrane. The enzyme catalyses L-methionine(out) + ATP + H2O = L-methionine(in) + ADP + phosphate + H(+). It carries out the reaction D-methionine(out) + ATP + H2O = D-methionine(in) + ADP + phosphate + H(+). In terms of biological role, part of the ABC transporter complex MetNIQ involved in methionine import. Responsible for energy coupling to the transport system. The sequence is that of Methionine import ATP-binding protein MetN 1 from Staphylococcus aureus (strain bovine RF122 / ET3-1).